The following is a 901-amino-acid chain: Protein translocase subunit SecA (901 aa).

ATP-binding positions include glutamine 87, 105-109, and aspartate 512; that span reads GEGKT. The disordered stretch occupies residues 855-891; sequence QQLSHQDDETAAAAALAEQTGERKVGRNDPCPCGSGK. Zn(2+)-binding residues include cysteine 885, cysteine 887, cysteine 896, and histidine 897.

The protein belongs to the SecA family. In terms of assembly, monomer and homodimer. Part of the essential Sec protein translocation apparatus which comprises SecA, SecYEG and auxiliary proteins SecDF-YajC and YidC. Zn(2+) serves as cofactor.

It is found in the cell inner membrane. The protein resides in the cytoplasm. The enzyme catalyses ATP + H2O + cellular proteinSide 1 = ADP + phosphate + cellular proteinSide 2.. In terms of biological role, part of the Sec protein translocase complex. Interacts with the SecYEG preprotein conducting channel. Has a central role in coupling the hydrolysis of ATP to the transfer of proteins into and across the cell membrane, serving both as a receptor for the preprotein-SecB complex and as an ATP-driven molecular motor driving the stepwise translocation of polypeptide chains across the membrane. This chain is Protein translocase subunit SecA, found in Cronobacter sakazakii (strain ATCC BAA-894) (Enterobacter sakazakii).